We begin with the raw amino-acid sequence, 249 residues long: Acidic leucine-rich nuclear phosphoprotein 32 family member A (249 aa).

Thr15 bears the Phosphothreonine mark. Residue Ser17 is modified to Phosphoserine. LRR repeat units follow at residues 18–38, 43–64, 65–87, and 89–110; these read DVKE…EGLT, ELEF…PKLN, KLKK…AEKC, and NLTH…EPLK. In terms of domain architecture, LRRCT spans 123 to 161; the sequence is CEVTNLNDYRENVFKLLPQLTYLDGYDRDDKEAPDSDAE. The span at 147–156 shows a compositional bias: basic and acidic residues; it reads GYDRDDKEAP. The segment at 147 to 249 is disordered; the sequence is GYDRDDKEAP…EPEDEGEDDD (103 aa). Residues 150–174 are necessary for tumor-suppressive function; that stretch reads RDDKEAPDSDAEGYVEGLDDEEEDE. Positions 157–230 are enriched in acidic residues; that stretch reads DSDAEGYVEG…DEEDEEELGE (74 aa). A phosphoserine; by CK2 mark is found at Ser158 and Ser204. The interval 165–249 is interaction with E4F1; the sequence is EGLDDEEEDE…EPEDEGEDDD (85 aa).

Belongs to the ANP32 family. In terms of assembly, component of the SET complex, composed of at least ANP32A, APEX1, HMGB2, NME1, SET and TREX1. Directly interacts with SET. Interacts with ATXN1/SCA1. Interacts with MAP1B. Interacts with ELAVL1. Part of the INHAT (inhibitor of histone acetyltransferases) complex. Interacts with E4F1. As to quaternary structure, (Microbial infection) Interacts (via C-terminus) with influenza virus A protein PB2; this interaction promotes viral replication. (Microbial infection) Interacts (via C-terminus) with influenza virus B protein PB2; this interaction promotes viral replication. In terms of assembly, (Microbial infection) Interacts (via C-terminus) with influenza virus C protein PB2; this interaction promotes viral replication by bridging viral replicase dimers together. Post-translationally, phosphorylated on serine residues, at least in part by casein kinase 2/CK2. The N-terminus is blocked. In terms of processing, some glutamate residues are glycylated by TTLL8. This modification occurs exclusively on glutamate residues and results in a glycine chain on the gamma-carboxyl group. In terms of tissue distribution, expressed in all tissues tested. Highly expressed in kidney and skeletal muscle, moderate levels of expression in brain, placenta and pancreas, and weakly expressed in lung. Found in all regions of the brain examined (amygdala, caudate nucleus, corpus callosum, hippocampus and thalamus), with highest levels in amygdala.

Its subcellular location is the nucleus. It is found in the cytoplasm. It localises to the endoplasmic reticulum. In terms of biological role, multifunctional protein that is involved in the regulation of many processes including tumor suppression, apoptosis, cell cycle progression or transcription. Promotes apoptosis by favouring the activation of caspase-9/CASP9 and allowing apoptosome formation. In addition, plays a role in the modulation of histone acetylation and transcription as part of the INHAT (inhibitor of histone acetyltransferases) complex. Inhibits the histone-acetyltranferase activity of EP300/CREBBP (CREB-binding protein) and EP300/CREBBP-associated factor by histone masking. Preferentially binds to unmodified histone H3 and sterically inhibiting its acetylation and phosphorylation leading to cell growth inhibition. Participates in other biochemical processes such as regulation of mRNA nuclear-to-cytoplasmic translocation and stability by its association with ELAVL1 (Hu-antigen R). Plays a role in E4F1-mediated transcriptional repression as well as inhibition of protein phosphatase 2A. (Microbial infection) Plays an essential role in influenza A, B and C viral genome replication. Mechanistically, mediates the assembly of the viral replicase asymmetric dimers composed of PB1, PB2 and PA via its N-terminal region. Also plays an essential role in foamy virus mRNA export from the nucleus. The polypeptide is Acidic leucine-rich nuclear phosphoprotein 32 family member A (ANP32A) (Homo sapiens (Human)).